The primary structure comprises 418 residues: MNIFEELKARGLVFQTTDEEALVKALTEGQVSYYTGYDPTADSLHLGHLVAILTSRRLQLAGHKPYALVGGATGLIGDPSFKDAERILQTKETVLDWSQKIKEQLSCFLDFDNGENKAELVNNYDWFSQISFIDFLRDVGKHFTVNYMMSKDSVKKRIETGISYTEFAYQVMQGYDFYELNAKHNVTLQIGGSDQWGNMTAGTELLRKKADKTGHVMTVPLITDATGKKFGKSEGNAIWLDAKKTSPYEMYQFWLNVMDDDAVRFLKIFTFLSLDEIAAIEEQFNAARHERLAQKTLAREVVTLVHGEAAYQQALNITEQLFAGAIKNLSAAELKQGLSNVPNYQVQAEDSLNIVDMLVTAGISPSKRQAREDLQNGAIYLNGERLQNLDYSLSTADRIDNQLTVIRRGKKKYAVLTY.

Residue Y34 coordinates L-tyrosine. Residues 39 to 48 carry the 'HIGH' region motif; the sequence is PTADSLHLGH. L-tyrosine contacts are provided by Y169 and Q173. The 'KMSKS' region signature appears at 229 to 233; that stretch reads KFGKS. ATP is bound at residue K232. Positions 352-418 constitute an S4 RNA-binding domain; sequence LNIVDMLVTA…GKKKYAVLTY (67 aa).

It belongs to the class-I aminoacyl-tRNA synthetase family. TyrS type 1 subfamily. Homodimer.

It localises to the cytoplasm. The catalysed reaction is tRNA(Tyr) + L-tyrosine + ATP = L-tyrosyl-tRNA(Tyr) + AMP + diphosphate + H(+). Its function is as follows. Catalyzes the attachment of tyrosine to tRNA(Tyr) in a two-step reaction: tyrosine is first activated by ATP to form Tyr-AMP and then transferred to the acceptor end of tRNA(Tyr). The protein is Tyrosine--tRNA ligase of Streptococcus equi subsp. zooepidemicus (strain H70).